The sequence spans 218 residues: Adenylate kinase (218 aa).

10–15 (GAGKGT) provides a ligand contact to ATP. The NMP stretch occupies residues 30–59 (STGDMLRAAVKAGSPLGLKVKEVMATGGLV). Residues threonine 31, arginine 36, 57–59 (GLV), 85–88 (GFPR), and glutamine 92 each bind AMP. Residues 122–159 (GRRVHEASGRVYHVDYNPPKVEGKDDVTGEPLVQREDD) form an LID region. ATP contacts are provided by residues arginine 123 and 132-133 (VY). 2 residues coordinate AMP: arginine 156 and arginine 167. Glycine 203 contributes to the ATP binding site.

It belongs to the adenylate kinase family. As to quaternary structure, monomer.

It is found in the cytoplasm. The enzyme catalyses AMP + ATP = 2 ADP. The protein operates within purine metabolism; AMP biosynthesis via salvage pathway; AMP from ADP: step 1/1. Its function is as follows. Catalyzes the reversible transfer of the terminal phosphate group between ATP and AMP. Plays an important role in cellular energy homeostasis and in adenine nucleotide metabolism. In Hahella chejuensis (strain KCTC 2396), this protein is Adenylate kinase.